The following is a 163-amino-acid chain: Phosphopantetheine adenylyltransferase (163 aa).

Thr-9 lines the substrate pocket. ATP-binding positions include 9 to 10 (TF) and His-17. Residues Lys-41, Leu-76, and Arg-90 each contribute to the substrate site. Residues 91–93 (GLR), Glu-101, and 126–132 (YSFISST) each bind ATP.

It belongs to the bacterial CoaD family. As to quaternary structure, homohexamer. Mg(2+) is required as a cofactor.

The protein localises to the cytoplasm. The catalysed reaction is (R)-4'-phosphopantetheine + ATP + H(+) = 3'-dephospho-CoA + diphosphate. Its pathway is cofactor biosynthesis; coenzyme A biosynthesis; CoA from (R)-pantothenate: step 4/5. Reversibly transfers an adenylyl group from ATP to 4'-phosphopantetheine, yielding dephospho-CoA (dPCoA) and pyrophosphate. This Dichelobacter nodosus (strain VCS1703A) protein is Phosphopantetheine adenylyltransferase.